The primary structure comprises 240 residues: tRNA pseudouridine synthase A (240 aa).

D52 (nucleophile) is an active-site residue. Residue Y110 coordinates substrate.

This sequence belongs to the tRNA pseudouridine synthase TruA family. As to quaternary structure, homodimer.

The enzyme catalyses uridine(38/39/40) in tRNA = pseudouridine(38/39/40) in tRNA. Functionally, formation of pseudouridine at positions 38, 39 and 40 in the anticodon stem and loop of transfer RNAs. This is tRNA pseudouridine synthase A from Solibacter usitatus (strain Ellin6076).